The primary structure comprises 347 residues: 3-isopropylmalate dehydrogenase (347 aa).

Positions 87, 97, 121, and 212 each coordinate substrate. Mg(2+) contacts are provided by Asp212, Asp236, and Asp240. Residue 272-284 (GSAPDIAGQGTAD) participates in NAD(+) binding.

This sequence belongs to the isocitrate and isopropylmalate dehydrogenases family. LeuB type 2 subfamily. Homodimer. It depends on Mg(2+) as a cofactor. The cofactor is Mn(2+).

The protein localises to the cytoplasm. The catalysed reaction is (2R,3S)-3-isopropylmalate + NAD(+) = 4-methyl-2-oxopentanoate + CO2 + NADH. The protein operates within amino-acid biosynthesis; L-leucine biosynthesis; L-leucine from 3-methyl-2-oxobutanoate: step 3/4. Catalyzes the oxidation of 3-carboxy-2-hydroxy-4-methylpentanoate (3-isopropylmalate) to 3-carboxy-4-methyl-2-oxopentanoate. The product decarboxylates to 4-methyl-2 oxopentanoate. This Saccharopolyspora erythraea (strain ATCC 11635 / DSM 40517 / JCM 4748 / NBRC 13426 / NCIMB 8594 / NRRL 2338) protein is 3-isopropylmalate dehydrogenase.